Here is a 676-residue protein sequence, read N- to C-terminus: A-type ATP synthase subunit I (676 aa).

8 consecutive transmembrane segments (helical) span residues 341–361, 390–410, 449–469, 490–510, 538–558, 564–584, 590–610, and 617–637; these read VFIA…IGYG, AGVM…PFIV, ILLF…FALG, IIGV…VGVF, LNVY…LFVM, MGAM…QIMS, AIGL…MKLI, and IPIV…ILGI.

It belongs to the V-ATPase 116 kDa subunit family. In terms of assembly, has multiple subunits with at least A(3), B(3), C, D, E, F, H, I and proteolipid K(x).

It localises to the cell membrane. Its function is as follows. Component of the A-type ATP synthase that produces ATP from ADP in the presence of a proton gradient across the membrane. In Archaeoglobus fulgidus (strain ATCC 49558 / DSM 4304 / JCM 9628 / NBRC 100126 / VC-16), this protein is A-type ATP synthase subunit I.